The primary structure comprises 159 residues: Ribosomal RNA large subunit methyltransferase H (159 aa).

Residues Leu-76, Gly-108, and Phe-127 to Phe-132 contribute to the S-adenosyl-L-methionine site.

The protein belongs to the RNA methyltransferase RlmH family. As to quaternary structure, homodimer.

Its subcellular location is the cytoplasm. It carries out the reaction pseudouridine(1915) in 23S rRNA + S-adenosyl-L-methionine = N(3)-methylpseudouridine(1915) in 23S rRNA + S-adenosyl-L-homocysteine + H(+). Specifically methylates the pseudouridine at position 1915 (m3Psi1915) in 23S rRNA. The chain is Ribosomal RNA large subunit methyltransferase H from Staphylococcus saprophyticus subsp. saprophyticus (strain ATCC 15305 / DSM 20229 / NCIMB 8711 / NCTC 7292 / S-41).